We begin with the raw amino-acid sequence, 651 residues long: Probable potassium transport system protein Kup 3 (651 aa).

A run of 12 helical transmembrane segments spans residues 38-58 (FWAL…TSPL), 77-97 (VLVL…VTAK), 129-149 (LFLL…SMIT), 166-186 (PALE…LFGV), 197-217 (FFGP…AMHI), 242-262 (IGLV…ALYA), 276-296 (WLGF…ALVL), 314-334 (LVLP…QAVI), 366-386 (IYLP…VLLF), 396-416 (YGIA…VVIW), 421-441 (WSWP…AMFF), and 448-468 (LLDG…VIWT).

Belongs to the HAK/KUP transporter (TC 2.A.72) family.

Its subcellular location is the cell inner membrane. The catalysed reaction is K(+)(in) + H(+)(in) = K(+)(out) + H(+)(out). Functionally, transport of potassium into the cell. Likely operates as a K(+):H(+) symporter. The chain is Probable potassium transport system protein Kup 3 from Rhodopseudomonas palustris (strain ATCC BAA-98 / CGA009).